The primary structure comprises 503 residues: Cytochrome c-552 (503 aa).

The first 16 residues, 1 to 16, serve as a signal peptide directing secretion; sequence MKKNTIILVGALIAIA. H102 provides a ligand contact to heme c. Residues C130, C133, and K134 each coordinate heme. The heme c site is built by C168, C171, H172, C210, C213, and H214. The Ca(2+) site is built by E216, Y217, K273, and Q275. A substrate-binding site is contributed by Y217. H276 is a substrate binding site. Heme c contacts are provided by H287, C294, C297, H298, H312, C325, C328, H329, and H404.

It belongs to the cytochrome c-552 family. It depends on Ca(2+) as a cofactor. Heme c is required as a cofactor.

The protein localises to the periplasm. The enzyme catalyses 6 Fe(III)-[cytochrome c] + NH4(+) + 2 H2O = 6 Fe(II)-[cytochrome c] + nitrite + 8 H(+). Its pathway is nitrogen metabolism; nitrate reduction (assimilation). In terms of biological role, catalyzes the reduction of nitrite to ammonia, consuming six electrons in the process. The sequence is that of Cytochrome c-552 from Maridesulfovibrio salexigens (strain ATCC 14822 / DSM 2638 / NCIMB 8403 / VKM B-1763) (Desulfovibrio salexigens).